Here is a 2587-residue protein sequence, read N- to C-terminus: Clavatol synthase claF (2587 aa).

The interval 93–256 (LLSPLVVIVQ…TEVALSGRFH (164 aa)) is N-terminal acylcarrier protein transacylase domain (SAT). Cys-137 serves as the catalytic Nucleophile; for transacylase activity. The Proton donor/acceptor; for transacylase activity role is filled by His-256. Residues 383 to 799 (DDQIAVIGMA…GSNASMIITQ (417 aa)) form the Ketosynthase family 3 (KS3) domain. Residues Cys-548, His-683, and His-722 each act as for beta-ketoacyl synthase activity in the active site. The interval 912-1222 (CFGGQISTYV…ESLPLLAEAT (311 aa)) is malonyl-CoA:ACP transacylase (MAT) domain. Residues 1284–1416 (PKGLTTFIGF…GSIVFLPASD (133 aa)) form an N-terminal hotdog fold region. Positions 1284–1595 (PKGLTTFIGF…YRLVPMDSMR (312 aa)) constitute a PKS/mFAS DH domain. The segment at 1315-1593 (LTSANVALNT…ISYRLVPMDS (279 aa)) is product template (PT) domain. The tract at residues 1436–1595 (ASLLQGNGAD…YRLVPMDSMR (160 aa)) is C-terminal hotdog fold. The interval 1609-1635 (STAAVSSKSTPVHAPTPTTTVSSTPSS) is disordered. The span at 1617–1635 (STPVHAPTPTTTVSSTPSS) shows a compositional bias: low complexity. Residues 1654 to 1728 (PDISAKMCEI…SLVSCIRSTL (75 aa)) form the Carrier domain. An O-(pantetheine 4'-phosphoryl)serine modification is found at Ser-1688. Residues Tyr-1947, His-2059, and Glu-2085 each act as for methyltransferase activity in the active site. The methyltransferase (CMeT) domain stretch occupies residues 1952–2126 (VNTVWIKQLE…ATYWEKVLQS (175 aa)). The NADPH-binding (R) domain stretch occupies residues 2208–2452 (SLSSGQCVLV…KILPELDGTL (245 aa)).

It depends on pantetheine 4'-phosphate as a cofactor.

The catalysed reaction is 3 malonyl-CoA + acetyl-CoA + AH2 + 2 S-adenosyl-L-methionine + H(+) = clavatol + A + 2 S-adenosyl-L-homocysteine + 3 CO2 + 4 CoA + H2O. The protein operates within secondary metabolite biosynthesis. Non-reducing polyketide synthase; part of the cla gene cluster that produces clavatol and ortho-quinone methide. The clavatol biosynthesis cluster cla and the terrestric acid cluster tra are both involved in the production of peniphenones and penilactones. The non-reducing PKS claF is responsible for the formation of clavatol from successive condensations of 3 malonyl-CoA units, presumably with a simple acetyl-CoA starter unit, and 2 methylation steps. The esterase claE probably collaborates with claF by catalyzing the hydrolysis of ACP-bound acyl intermediates to free the ACP from stalled intermediates. The clavatol oxidase claD then converts clavatol to hydroxyclavatol. Spontaneous dehydration of hydroxyclavatol leads to the accumulation of the highly active ortho-quinone methide. On the other hand, the PKS-NRPS hybrid traA is involved in the formation of crustosic acid, with the help of traB and traD. The polyketide synthase module (PKS) of traA is responsible for the synthesis of the polyketide backbone via the condensation of an acetyl-CoA starter unit with 3 malonyl-CoA units. The downstream nonribosomal peptide synthetase (NRPS) module then amidates the carboxyl end of the polyketide with L-malic acid. Because traA lacks a designated enoylreductase (ER) domain, the required activity is provided the enoyl reductase traG. Crustosic acid undergoes decarboxylation and isomerization to the terrestric acid, catalyzed by the 2-oxoglutarate-dependent dioxygenase traH. Both acids are further converted to the 2 gamma-butyrolactones (R)-5-methyltetronic acid and (S)-5-carboxylmethyltetronic acid, with involvement of the cytochrome P450 monooxygenase claJ. Spontaneous addition of the methide to these gamma-butyrolactones leads to peniphenone D and penilactone D, which undergo again stereospecific attacking by methide to give penilactones A and B. This Penicillium crustosum (Blue mold fungus) protein is Clavatol synthase claF.